Consider the following 84-residue polypeptide: MNLFDFFRERKKQSSASIAKERLQIIVAHERGQRSAPDYLPDLQKELIEVIRKYVNIDNDQVQVVLEDQGNCSILELNVTLPDR.

It belongs to the MinE family.

In terms of biological role, prevents the cell division inhibition by proteins MinC and MinD at internal division sites while permitting inhibition at polar sites. This ensures cell division at the proper site by restricting the formation of a division septum at the midpoint of the long axis of the cell. In Azotobacter vinelandii (strain DJ / ATCC BAA-1303), this protein is Cell division topological specificity factor.